The sequence spans 47 residues: MQLITDMAEWSSKPFRPDMSLTGWLAFVGLIIVAIILWQQIIRFIIE.

The chain crosses the membrane as a helical span at residues 22-42; it reads TGWLAFVGLIIVAIILWQQII.

As to quaternary structure, heterodimer of P20 and P22; further multimerizes as hexamers of heterodimers. Part of the dodecameric portal complex that is composed of the packaging efficiency factor P6, the DNA packaging ATPase P9, and the internal heterododecamer P20/P22 which spans the virion inner membrane.

The protein resides in the virion membrane. Functionally, together with P22, forms the internal part of the portal complex embeded in the virion internal membrane and which plays critical roles in genome packaging and genome ejection. Both proteins multimerize as a single ring-shaped heterdodecamer arranged around a central channel and interact with the P6/P9 external part of the portal. The sequence is that of Packaging protein P22 (XXII) from Enterobacteria phage PRD1 (Bacteriophage PRD1).